The following is a 1338-amino-acid chain: Protein dispatched homolog 3 (1338 aa).

The Cytoplasmic segment spans residues 1 to 67; sequence MDTEDDPLLQ…VGWIFTNPYC (67 aa). The helical transmembrane segment at 68 to 88 threads the bilayer; that stretch reads AGFILFLGCAIPAVLAVVMFL. The Lumenal segment spans residues 89-406; it reads HYPALDIDIS…YEVRRTFNND (318 aa). The interval 164-196 is disordered; it reads TRAKRSAPQGRTSSPEPRAHPHPGNETSRVTRG. Residues 401–559 form the SSD domain; the sequence is RTFNNDMLLA…LFTMPAALGI (159 aa). A helical membrane pass occupies residues 407–427; it reads MLLAFISSSCIAVLVYILTSC. A topological domain (cytoplasmic) is located at residue serine 428. A helical transmembrane segment spans residues 429 to 449; it reads VFLSFFGIASIGLSCLVALFL. The Lumenal portion of the chain corresponds to 450-452; sequence YHV. A helical transmembrane segment spans residues 453–473; sequence VFGIQYLGILNGVAAFVIVGI. Residues 474–517 are Cytoplasmic-facing; the sequence is GVDDVFVFINTYRQATHLKDLRLRMIHTIQTAGKATFFTSLTTA. Residues 518-538 traverse the membrane as a helical segment; it reads AAYAANIFSQIPAVHDFGLFM. Serine 539 is a topological domain (lumenal). The chain crosses the membrane as a helical span at residues 540-560; that stretch reads LIVSCCWVAVLFTMPAALGIW. The Cytoplasmic portion of the chain corresponds to 561-672; that stretch reads TLYVSPLESS…WVLWSAVKSR (112 aa). Residues 673 to 693 traverse the membrane as a helical segment; sequence WVIVGLFLLVLLLSIFFASRL. Residues 694-1128 lie on the Lumenal side of the membrane; it reads RPASRAPVLF…IFMEIIGVQS (435 aa). Residues 747–768 form a disordered region; that stretch reads SLEKKKRGSASPWGSKGSISDT. The chain crosses the membrane as a helical span at residues 1129–1149; sequence ALYGLILSLVICVAAVAVFTT. Histidine 1150 is a topological domain (cytoplasmic). The chain crosses the membrane as a helical span at residues 1151–1171; that stretch reads ILLLLPVLLSILGVVCLVVTI. Topologically, residues 1172–1237 are lumenal; that stretch reads MYWSGWEMGA…TIEAIRHVGV (66 aa). The helical transmembrane segment at 1238 to 1258 threads the bilayer; the sequence is AIVSSAVTTVIATVPLFFCII. At 1259–1266 the chain is on the cytoplasmic side; the sequence is APFAKFGK. Residues 1267-1287 form a helical membrane-spanning segment; the sequence is IVALNTGVSILYTLTVSTALL. Residues 1288–1302 are Lumenal-facing; the sequence is SIMGPGTFTRSRTSC. Residues 1303–1323 traverse the membrane as a helical segment; sequence LKAVAGVLLAGLLGLCICLAL. The Cytoplasmic portion of the chain corresponds to 1324-1338; it reads LKGGFKIPLPNGTAL.

It belongs to the patched family. Expressed in retina, hippocampus and cerebellum. Expressed in the ganglion and bipolar cells of the inner and outer nuclear layers of the retina and in Purkinje cells (at protein level). Expressed strongly in brain and retina, weakly in testis and bone marrow.

It is found in the endoplasmic reticulum membrane. The protein localises to the nucleus membrane. It localises to the cytoplasmic vesicle membrane. Plays a role in neuronal proliferation and differentiation. Plays a role in the accumulation of cellular cholesterol. Involved in intracellular lipid droplet formation. May contribute to cholesterol homeostasis in neuronal cells. The sequence is that of Protein dispatched homolog 3 from Gallus gallus (Chicken).